We begin with the raw amino-acid sequence, 195 residues long: Dephospho-CoA kinase (195 aa).

Positions 3–195 constitute a DPCK domain; the sequence is IIGLTGSIAM…LFVIKSLLKN (193 aa). 11 to 16 is a binding site for ATP; it reads AMGKST.

It belongs to the CoaE family.

The protein localises to the cytoplasm. The catalysed reaction is 3'-dephospho-CoA + ATP = ADP + CoA + H(+). It functions in the pathway cofactor biosynthesis; coenzyme A biosynthesis; CoA from (R)-pantothenate: step 5/5. In terms of biological role, catalyzes the phosphorylation of the 3'-hydroxyl group of dephosphocoenzyme A to form coenzyme A. The polypeptide is Dephospho-CoA kinase (Bartonella henselae (strain ATCC 49882 / DSM 28221 / CCUG 30454 / Houston 1) (Rochalimaea henselae)).